The sequence spans 437 residues: GTPase Der (437 aa).

2 consecutive EngA-type G domains span residues 3 to 168 and 178 to 353; these read PLIA…PESE and VKLA…RNRS. GTP is bound by residues 9–16, 56–60, 120–123, 184–191, 231–235, and 296–299; these read GRPNVGKS, DTGGY, NKVE, DTAGL, and NKWD. The region spanning 354–437 is the KH-like domain; it reads RKISTSSLNR…VPISLRFMEK (84 aa).

Belongs to the TRAFAC class TrmE-Era-EngA-EngB-Septin-like GTPase superfamily. EngA (Der) GTPase family. As to quaternary structure, associates with the 50S ribosomal subunit.

Functionally, GTPase that plays an essential role in the late steps of ribosome biogenesis. This chain is GTPase Der, found in Chlorobium limicola (strain DSM 245 / NBRC 103803 / 6330).